Reading from the N-terminus, the 154-residue chain is MHKKSSTLIRKREISDVTKESKVVLKSDQQWREQLSEQEYHVCREQGTEPPFSGKLLHNKDSGEYACTCCYAPLFSSVNKYDSGCGWPSFDAPINETAVLYLDDFSHGMKRVEIRCARCDSHLGHVFPDGPKTTGERFCVNSVSLIFNKIETNE.

Residues 28-150 (DQQWREQLSE…NSVSLIFNKI (123 aa)) enclose the MsrB domain. Cysteine 67, cysteine 70, cysteine 116, and cysteine 119 together coordinate Zn(2+). Residue cysteine 139 is the Nucleophile of the active site.

Belongs to the MsrB Met sulfoxide reductase family. It depends on Zn(2+) as a cofactor.

The enzyme catalyses L-methionyl-[protein] + [thioredoxin]-disulfide + H2O = L-methionyl-(R)-S-oxide-[protein] + [thioredoxin]-dithiol. In Vibrio vulnificus (strain YJ016), this protein is Peptide methionine sulfoxide reductase MsrB.